We begin with the raw amino-acid sequence, 163 residues long: Phosphopantetheine adenylyltransferase (163 aa).

Position 11 (Thr-11) interacts with substrate. Residues 11–12 (TF) and His-19 each bind ATP. Residues Lys-43, Leu-75, and Arg-89 each coordinate substrate. Residues 90–92 (GLR), Glu-100, and 125–131 (YSFISST) each bind ATP.

It belongs to the bacterial CoaD family. Homohexamer. It depends on Mg(2+) as a cofactor.

The protein resides in the cytoplasm. The catalysed reaction is (R)-4'-phosphopantetheine + ATP + H(+) = 3'-dephospho-CoA + diphosphate. The protein operates within cofactor biosynthesis; coenzyme A biosynthesis; CoA from (R)-pantothenate: step 4/5. Functionally, reversibly transfers an adenylyl group from ATP to 4'-phosphopantetheine, yielding dephospho-CoA (dPCoA) and pyrophosphate. This is Phosphopantetheine adenylyltransferase from Acinetobacter baumannii (strain ACICU).